The chain runs to 186 residues: Peptidyl-tRNA hydrolase (186 aa).

Tyr14 is a tRNA binding site. The active-site Proton acceptor is the His19. Residues Tyr64, Asn66, and Asn112 each contribute to the tRNA site.

It belongs to the PTH family. Monomer.

It is found in the cytoplasm. It catalyses the reaction an N-acyl-L-alpha-aminoacyl-tRNA + H2O = an N-acyl-L-amino acid + a tRNA + H(+). Its function is as follows. Hydrolyzes ribosome-free peptidyl-tRNAs (with 1 or more amino acids incorporated), which drop off the ribosome during protein synthesis, or as a result of ribosome stalling. Catalyzes the release of premature peptidyl moieties from peptidyl-tRNA molecules trapped in stalled 50S ribosomal subunits, and thus maintains levels of free tRNAs and 50S ribosomes. This chain is Peptidyl-tRNA hydrolase, found in Bacillus cereus (strain ATCC 14579 / DSM 31 / CCUG 7414 / JCM 2152 / NBRC 15305 / NCIMB 9373 / NCTC 2599 / NRRL B-3711).